A 178-amino-acid chain; its full sequence is ATP synthase subunit delta (178 aa).

It belongs to the ATPase delta chain family. In terms of assembly, F-type ATPases have 2 components, F(1) - the catalytic core - and F(0) - the membrane proton channel. F(1) has five subunits: alpha(3), beta(3), gamma(1), delta(1), epsilon(1). F(0) has three main subunits: a(1), b(2) and c(10-14). The alpha and beta chains form an alternating ring which encloses part of the gamma chain. F(1) is attached to F(0) by a central stalk formed by the gamma and epsilon chains, while a peripheral stalk is formed by the delta and b chains.

It is found in the cell inner membrane. F(1)F(0) ATP synthase produces ATP from ADP in the presence of a proton or sodium gradient. F-type ATPases consist of two structural domains, F(1) containing the extramembraneous catalytic core and F(0) containing the membrane proton channel, linked together by a central stalk and a peripheral stalk. During catalysis, ATP synthesis in the catalytic domain of F(1) is coupled via a rotary mechanism of the central stalk subunits to proton translocation. In terms of biological role, this protein is part of the stalk that links CF(0) to CF(1). It either transmits conformational changes from CF(0) to CF(1) or is implicated in proton conduction. The protein is ATP synthase subunit delta of Dechloromonas aromatica (strain RCB).